A 271-amino-acid chain; its full sequence is 5-amino-6-(5-phospho-D-ribitylamino)uracil phosphatase YbjI (271 aa).

Asp-9 acts as the Nucleophile in catalysis. Mg(2+) is bound at residue Asp-9. Met-10 contributes to the phosphate binding site. Asp-11 provides a ligand contact to Mg(2+). Phosphate contacts are provided by residues 44–45 (SG) and Lys-192. Asp-215 contacts Mg(2+). Phosphate is bound at residue Asn-218.

This sequence belongs to the HAD-like hydrolase superfamily. Cof family. Requires Mg(2+) as cofactor. Mn(2+) is required as a cofactor. It depends on Co(2+) as a cofactor. Zn(2+) serves as cofactor.

The enzyme catalyses 5-amino-6-(5-phospho-D-ribitylamino)uracil + H2O = 5-amino-6-(D-ribitylamino)uracil + phosphate. The protein operates within cofactor biosynthesis; riboflavin biosynthesis; 5-amino-6-(D-ribitylamino)uracil from GTP: step 4/4. Catalyzes the dephosphorylation of 5-amino-6-(5-phospho-D-ribitylamino)uracil, and thus could be involved in the riboflavin biosynthesis pathway. Is also able to dephosphorylate flavin mononucleotide (FMN), erythrose 4-phosphate and other phosphoric acid esters. This chain is 5-amino-6-(5-phospho-D-ribitylamino)uracil phosphatase YbjI (ybjI), found in Escherichia coli (strain K12).